The following is a 254-amino-acid chain: Triosephosphate isomerase (254 aa).

12–14 provides a ligand contact to substrate; that stretch reads NWK. H99 serves as the catalytic Electrophile. The active-site Proton acceptor is E169. Substrate is bound by residues G175, S214, and 235 to 236; that span reads GG.

It belongs to the triosephosphate isomerase family. Homodimer.

It is found in the cytoplasm. The catalysed reaction is D-glyceraldehyde 3-phosphate = dihydroxyacetone phosphate. The protein operates within carbohydrate biosynthesis; gluconeogenesis. It participates in carbohydrate degradation; glycolysis; D-glyceraldehyde 3-phosphate from glycerone phosphate: step 1/1. Involved in the gluconeogenesis. Catalyzes stereospecifically the conversion of dihydroxyacetone phosphate (DHAP) to D-glyceraldehyde-3-phosphate (G3P). The chain is Triosephosphate isomerase from Brucella melitensis biotype 1 (strain ATCC 23456 / CCUG 17765 / NCTC 10094 / 16M).